Consider the following 690-residue polypeptide: MTARRILVTSALPYANGQIHIGHLVEYIQTDIWVRFQRMMGNEVYYVGADDTHGTPVMLRAEKEGITPKQLIDRVWTEHKRDFDNFLVSFDNYYSTDAEENRQLCEKIYLALKAEDLITERDVEQFYDPVKNMFLPDRFIKGECPKCGAKDQYGDSCEVCGTTYVPTDLKNPYSVVSGATPVRKSSTHFFFKLSDPRCETFLREWVADLAQPEASNKMQEWLGAEGEASTLSDWDISRDAPYFGFEIPGAPGKYFYVWLDAPIGYYASFKNLAEKRGIDFDAWVGPHSTAEQYHFIGKDILYFHTLFWPAMLRFSGYRTPTNVFAHGFLTVDGAKMSKSRGTFITAQSYTDTGMNPEWLRYYFAAKLNASMEDLDLNLDDFVARVNSDLIGKYVNIASRAAGFLVKRFDGKVNEAALANPLLEQLRQAAPQLAQYYEGREYSKALRLVMELTDAVNAFVDTNKPWELAKDESKRDALHAACSVSLEAFRLLTIYLKPVVPTMAAGVERFLNVDPLDWRAIDKQLSADRPVQPYQHLMTRVDVKQIDALLAANRDSLQAAAPAAEAGAAGASAIEPVADTITIDDFAKIDLRVAKIVACDKVEGSNKLLQLTLDLGEGKTRNVFSGIQSAYTPEQLVGKLTVVVANLAPRKMKFGMSEGMVLAASAADEKANPGLYILEPHSGAVPGMRIR.

A 'HIGH' region motif is present at residues proline 13 to histidine 23. Zn(2+) is bound by residues cysteine 144, cysteine 147, cysteine 157, and cysteine 160. Residues lysine 335–serine 339 carry the 'KMSKS' region motif. Residue lysine 338 coordinates ATP. The 107-residue stretch at aspartate 584 to arginine 690 folds into the tRNA-binding domain.

It belongs to the class-I aminoacyl-tRNA synthetase family. MetG type 1 subfamily. Homodimer. Requires Zn(2+) as cofactor.

Its subcellular location is the cytoplasm. It carries out the reaction tRNA(Met) + L-methionine + ATP = L-methionyl-tRNA(Met) + AMP + diphosphate. In terms of biological role, is required not only for elongation of protein synthesis but also for the initiation of all mRNA translation through initiator tRNA(fMet) aminoacylation. In Cupriavidus metallidurans (strain ATCC 43123 / DSM 2839 / NBRC 102507 / CH34) (Ralstonia metallidurans), this protein is Methionine--tRNA ligase.